Reading from the N-terminus, the 207-residue chain is Peptidyl-tRNA hydrolase (207 aa).

Residue Tyr14 participates in tRNA binding. His19 acts as the Proton acceptor in catalysis. The tRNA site is built by Tyr64, Asn66, and Asn112.

It belongs to the PTH family. Monomer.

It is found in the cytoplasm. The enzyme catalyses an N-acyl-L-alpha-aminoacyl-tRNA + H2O = an N-acyl-L-amino acid + a tRNA + H(+). Functionally, hydrolyzes ribosome-free peptidyl-tRNAs (with 1 or more amino acids incorporated), which drop off the ribosome during protein synthesis, or as a result of ribosome stalling. Catalyzes the release of premature peptidyl moieties from peptidyl-tRNA molecules trapped in stalled 50S ribosomal subunits, and thus maintains levels of free tRNAs and 50S ribosomes. The chain is Peptidyl-tRNA hydrolase from Rhodopseudomonas palustris (strain HaA2).